Here is a 208-residue protein sequence, read N- to C-terminus: Large ribosomal subunit protein uL4 (208 aa).

The tract at residues 47–84 (ARAARERSDVARTGKKFGRQKGGGTARHGDRRAPVFIG) is disordered. A compositionally biased stretch (basic and acidic residues) spans 49-58 (AARERSDVAR).

Belongs to the universal ribosomal protein uL4 family. In terms of assembly, part of the 50S ribosomal subunit.

Its function is as follows. One of the primary rRNA binding proteins, this protein initially binds near the 5'-end of the 23S rRNA. It is important during the early stages of 50S assembly. It makes multiple contacts with different domains of the 23S rRNA in the assembled 50S subunit and ribosome. In terms of biological role, forms part of the polypeptide exit tunnel. This is Large ribosomal subunit protein uL4 from Rhizorhabdus wittichii (strain DSM 6014 / CCUG 31198 / JCM 15750 / NBRC 105917 / EY 4224 / RW1) (Sphingomonas wittichii).